The chain runs to 168 residues: CDP-archaeol synthase (168 aa).

Transmembrane regions (helical) follow at residues 4-24 (IFEAFWYILPAYFANSSPVVL), 51-71 (GFFGGITVGTVVGTIQHLMFP), 81-101 (VGVAFLLSLGALVGDLIGSFI), 112-132 (PAVGLDQWGFLISALCFAYPL), and 138-158 (GEVLFLLVVTPVIHWLANVFA).

It belongs to the CDP-archaeol synthase family. Mg(2+) is required as a cofactor.

The protein localises to the cell membrane. The enzyme catalyses 2,3-bis-O-(geranylgeranyl)-sn-glycerol 1-phosphate + CTP + H(+) = CDP-2,3-bis-O-(geranylgeranyl)-sn-glycerol + diphosphate. The protein operates within membrane lipid metabolism; glycerophospholipid metabolism. Functionally, catalyzes the formation of CDP-2,3-bis-(O-geranylgeranyl)-sn-glycerol (CDP-archaeol) from 2,3-bis-(O-geranylgeranyl)-sn-glycerol 1-phosphate (DGGGP) and CTP. This reaction is the third ether-bond-formation step in the biosynthesis of archaeal membrane lipids. This Pyrococcus abyssi (strain GE5 / Orsay) protein is CDP-archaeol synthase.